The sequence spans 336 residues: Fructose-1,6-bisphosphatase class 1 (336 aa).

E90, D112, L114, and D115 together coordinate Mg(2+). Substrate-binding positions include 115-118 (DGSS), N211, and K277. E283 contributes to the Mg(2+) binding site.

The protein belongs to the FBPase class 1 family. In terms of assembly, homotetramer. Mg(2+) is required as a cofactor.

It localises to the cytoplasm. The catalysed reaction is beta-D-fructose 1,6-bisphosphate + H2O = beta-D-fructose 6-phosphate + phosphate. It functions in the pathway carbohydrate biosynthesis; gluconeogenesis. This Pseudomonas putida (strain ATCC 700007 / DSM 6899 / JCM 31910 / BCRC 17059 / LMG 24140 / F1) protein is Fructose-1,6-bisphosphatase class 1.